A 964-amino-acid polypeptide reads, in one-letter code: Glycine dehydrogenase (decarboxylating) (964 aa).

Residue Lys-711 is modified to N6-(pyridoxal phosphate)lysine.

The protein belongs to the GcvP family. In terms of assembly, the glycine cleavage system is composed of four proteins: P, T, L and H. It depends on pyridoxal 5'-phosphate as a cofactor.

The catalysed reaction is N(6)-[(R)-lipoyl]-L-lysyl-[glycine-cleavage complex H protein] + glycine + H(+) = N(6)-[(R)-S(8)-aminomethyldihydrolipoyl]-L-lysyl-[glycine-cleavage complex H protein] + CO2. The glycine cleavage system catalyzes the degradation of glycine. The P protein binds the alpha-amino group of glycine through its pyridoxal phosphate cofactor; CO(2) is released and the remaining methylamine moiety is then transferred to the lipoamide cofactor of the H protein. This chain is Glycine dehydrogenase (decarboxylating), found in Prochlorococcus marinus (strain SARG / CCMP1375 / SS120).